A 269-amino-acid chain; its full sequence is Cytochrome c oxidase subunit 3 (269 aa).

7 helical membrane-spanning segments follow: residues 21-41 (PWPI…ALAM), 45-65 (IGNM…ATLW), 90-110 (GFLL…WAYF), 138-160 (PLLN…HALI), 167-187 (ALSG…CQYI), 205-225 (FYAG…MLAI), and 247-267 (VIYL…FYWW).

It belongs to the cytochrome c oxidase subunit 3 family. As to quaternary structure, component of the cytochrome c oxidase (complex IV, CIV), a multisubunit enzyme composed of a catalytic core of 3 subunits and several supernumerary subunits. The complex exists as a monomer or a dimer and forms supercomplexes (SCs) in the inner mitochondrial membrane with ubiquinol-cytochrome c oxidoreductase (cytochrome b-c1 complex, complex III, CIII).

It localises to the mitochondrion inner membrane. The catalysed reaction is 4 Fe(II)-[cytochrome c] + O2 + 8 H(+)(in) = 4 Fe(III)-[cytochrome c] + 2 H2O + 4 H(+)(out). Its function is as follows. Component of the cytochrome c oxidase, the last enzyme in the mitochondrial electron transport chain which drives oxidative phosphorylation. The respiratory chain contains 3 multisubunit complexes succinate dehydrogenase (complex II, CII), ubiquinol-cytochrome c oxidoreductase (cytochrome b-c1 complex, complex III, CIII) and cytochrome c oxidase (complex IV, CIV), that cooperate to transfer electrons derived from NADH and succinate to molecular oxygen, creating an electrochemical gradient over the inner membrane that drives transmembrane transport and the ATP synthase. Cytochrome c oxidase is the component of the respiratory chain that catalyzes the reduction of oxygen to water. Electrons originating from reduced cytochrome c in the intermembrane space (IMS) are transferred via the dinuclear copper A center (CU(A)) of subunit 2 and heme A of subunit 1 to the active site in subunit 1, a binuclear center (BNC) formed by heme A3 and copper B (CU(B)). The BNC reduces molecular oxygen to 2 water molecules using 4 electrons from cytochrome c in the IMS and 4 protons from the mitochondrial matrix. This chain is Cytochrome c oxidase subunit 3 (COX3), found in Lachancea kluyveri (strain ATCC 58438 / CBS 3082 / BCRC 21498 / NBRC 1685 / JCM 7257 / NCYC 543 / NRRL Y-12651) (Yeast).